The primary structure comprises 178 residues: Large ribosomal subunit protein bL17 (178 aa).

2 stretches are compositionally biased toward low complexity: residues 123-139 (KAPA…NTAT) and 151-160 (EDAAAQAPVA). The interval 123–178 (KAPASAADAKAQINTATEAKEAEPEAPAEDAAAQAPVADEQKAAEVDEKAEEKPEA) is disordered. A compositionally biased stretch (basic and acidic residues) spans 161–178 (DEQKAAEVDEKAEEKPEA).

It belongs to the bacterial ribosomal protein bL17 family. Part of the 50S ribosomal subunit. Contacts protein L32.

The sequence is that of Large ribosomal subunit protein bL17 from Cutibacterium acnes (strain DSM 16379 / KPA171202) (Propionibacterium acnes).